A 273-amino-acid chain; its full sequence is SAGA-associated factor 29 homolog B (273 aa).

Residues 128-273 (EAYASLKGEQ…VVALPEGHRQ (146 aa)) enclose the SGF29 C-terminal domain. Histone H3K4me3 N-terminus binding stretches follow at residues 171-173 (DEE) and 220-223 (GTTA). Residues 245–248 (FDDD) form a histone H3K4me3 binding region.

The protein belongs to the SGF29 family. As to expression, expressed in roots, rosette leaves, cauline leaves, stems and flowers.

It is found in the nucleus. Its function is as follows. Chromatin reader component of the transcription regulatory histone acetylation (HAT) complex SAGA. This Arabidopsis thaliana (Mouse-ear cress) protein is SAGA-associated factor 29 homolog B.